We begin with the raw amino-acid sequence, 211 residues long: Probable GTP-binding protein EngB (211 aa).

Residues 30–204 (EGFEVAFAGR…YTVLADWMEL (175 aa)) form the EngB-type G domain. Residues 38 to 45 (GRSNAGKS), 64 to 68 (GRTQL), 82 to 85 (DLPG), 149 to 152 (TKAD), and 182 to 185 (LFSA) each bind GTP. Positions 45 and 66 each coordinate Mg(2+).

It belongs to the TRAFAC class TrmE-Era-EngA-EngB-Septin-like GTPase superfamily. EngB GTPase family. Mg(2+) serves as cofactor.

Functionally, necessary for normal cell division and for the maintenance of normal septation. This is Probable GTP-binding protein EngB from Pseudomonas savastanoi pv. phaseolicola (strain 1448A / Race 6) (Pseudomonas syringae pv. phaseolicola (strain 1448A / Race 6)).